Reading from the N-terminus, the 107-residue chain is Large ribosomal subunit protein eL33 (107 aa).

The protein belongs to the eukaryotic ribosomal protein eL33 family. As to quaternary structure, component of the large ribosomal subunit. Mature ribosomes consist of a small (40S) and a large (60S) subunit. The 40S subunit contains about 32 different proteins and 1 molecule of RNA (18S). The 60S subunit contains 45 different proteins and 3 molecules of RNA (25S, 5.8S and 5S).

The protein localises to the cytoplasm. In terms of biological role, component of the ribosome, a large ribonucleoprotein complex responsible for the synthesis of proteins in the cell. The small ribosomal subunit (SSU) binds messenger RNAs (mRNAs) and translates the encoded message by selecting cognate aminoacyl-transfer RNA (tRNA) molecules. The large subunit (LSU) contains the ribosomal catalytic site termed the peptidyl transferase center (PTC), which catalyzes the formation of peptide bonds, thereby polymerizing the amino acids delivered by tRNAs into a polypeptide chain. The nascent polypeptides leave the ribosome through a tunnel in the LSU and interact with protein factors that function in enzymatic processing, targeting, and the membrane insertion of nascent chains at the exit of the ribosomal tunnel. The protein is Large ribosomal subunit protein eL33 of Candida albicans (strain SC5314 / ATCC MYA-2876) (Yeast).